The sequence spans 300 residues: Jacalin-related lectin 33 (300 aa).

The interval 1-20 (MAQKVEAGGGAGGASWDDGV) is disordered. Alanine 2 carries the N-acetylalanine modification. 2 consecutive Jacalin-type lectin domains span residues 2-146 (AQKV…YFAT) and 154-297 (AKKL…HVMP).

Belongs to the jacalin lectin family. In terms of assembly, component of the PYK10 complex, at least composed of PYK10/BGLU23, BGLU21, BGLU22, JAL22, JAL23, PBP1/JAL30, PBP2/JAL31, JAL32, JAL33, JAL34, JAL35, GLL22 and GLL23.

Functionally, sugar-binding protein showing significant affinity for (Glc alpha(1-4)Glc)(3) maltohexaose, (Glc alpha(1-6)Glc)(3) isomaltohexaose, Gal alpha(1-4)Gal beta(1-4)Glc, GalNAc alpha(1-3)(Fuc alpha(1-2)) and Gal beta(1-3)(Fuc alpha(1-4))GlcNAc beta(1-3)Gal beta(1-4)Glc. In Arabidopsis thaliana (Mouse-ear cress), this protein is Jacalin-related lectin 33 (JAL33).